Consider the following 502-residue polypeptide: Glycerol kinase (502 aa).

Thr14 contacts ADP. 3 residues coordinate ATP: Thr14, Thr15, and Ser16. Thr14 contacts sn-glycerol 3-phosphate. Arg18 serves as a coordination point for ADP. 3 residues coordinate sn-glycerol 3-phosphate: Arg84, Glu85, and Tyr136. Glycerol is bound by residues Arg84, Glu85, and Tyr136. Residue His232 is modified to Phosphohistidine; by HPr. Residue Asp246 participates in sn-glycerol 3-phosphate binding. Glycerol contacts are provided by Asp246 and Gln247. ADP contacts are provided by Thr268 and Gly311. The ATP site is built by Thr268, Gly311, Gln315, and Gly412. ADP-binding residues include Gly412 and Asn416.

The protein belongs to the FGGY kinase family. Homotetramer and homodimer (in equilibrium). Post-translationally, the phosphoenolpyruvate-dependent sugar phosphotransferase system (PTS), including enzyme I, and histidine-containing protein (HPr) are required for the phosphorylation, which leads to the activation of the enzyme.

The catalysed reaction is glycerol + ATP = sn-glycerol 3-phosphate + ADP + H(+). It participates in polyol metabolism; glycerol degradation via glycerol kinase pathway; sn-glycerol 3-phosphate from glycerol: step 1/1. With respect to regulation, activated by phosphorylation and inhibited by fructose 1,6-bisphosphate (FBP). Key enzyme in the regulation of glycerol uptake and metabolism. Catalyzes the phosphorylation of glycerol to yield sn-glycerol 3-phosphate. This chain is Glycerol kinase, found in Streptococcus pneumoniae serotype 2 (strain D39 / NCTC 7466).